Reading from the N-terminus, the 154-residue chain is MASVSTHGNQEKSPHLPPLSKQSLLFCPKSKLHIHRGEIAKIIRECQEESFWKRALPFSLISMLVTQGLVHQGYLAANPRFGSLPKVALAGLLGFGLGKASYIRVCQSKFHSFEDQLRGAGFGPEHNRHCLLTCEDCKTRRGLSEKAGSQPSAS.

In terms of domain architecture, OCIA spans 1 to 120 (MASVSTHGNQ…HSFEDQLRGA (120 aa)). Lys41 is subject to N6-acetyllysine.

Interacts (via OCIA domain) with OCIAD1/ASRIJ and STAT3. In terms of tissue distribution, abundant in kidney, liver and brain.

The protein resides in the endosome. Its subcellular location is the mitochondrion. The protein localises to the mitochondrion inner membrane. In terms of biological role, has an essential role in the assembly of mitochondrial respiratory chain complex III. Is also required for STAT3 activation and plays a role in cell migration. This is OCIA domain-containing protein 2 (Ociad2) from Mus musculus (Mouse).